We begin with the raw amino-acid sequence, 187 residues long: Probable DNA endonuclease SmrA (187 aa).

In terms of domain architecture, Smr spans 88 to 169; it reads LNLLRQPVEE…GSGACYVALR (82 aa).

In terms of biological role, has DNA endonuclease activity. Binds DNA. The sequence is that of Probable DNA endonuclease SmrA (smrA) from Escherichia coli (strain K12).